Consider the following 427-residue polypeptide: MKKVEYWVKIPFGPIHPGLEEPEKFIITLDGERIVNVDVKLGYNLRGVQWIGMRRNYVQIMYLAERMCGICSFSHNHTYVRAVEEMAGIEVPERAEYIRVIVGELERIHSHLLNLGVVGHDIGYDTVLHLTWLARERVMDVLEAVSGNRVNYSMVTIGGVRRDIGEKQKRLILDMIKYYREVLPQIEDVFLHDSTIEARLRDVAVVPKKLAIEMGAVGPTARGSGIKEDSRWSEQLGVYPDLGIKPVTPEDVTGEKARGDVYDRMAVRIGELWMSLDLLEHALDQMPEGKIKTFPKDNILVAKLKLLGDGEGIGRYEAPRGELVHYVRGQKGRDGPVRWKPREPTFPNLFTIAKALEGNELADLVVAIASIDPCLSCTDRVAIVKEGKKVVLTEKDLLKLSIEKTKEINPNVKGDPTPTGIGCSRGV.

4 residues coordinate Ni(2+): Cys-68, Cys-71, Cys-374, and Cys-377.

This sequence belongs to the complex I 49 kDa subunit family. As to quaternary structure, the membrane-bound hydrogenase complex is composed of MbhK and MbhL, and may also contain MbhJ. Ni(2+) is required as a cofactor.

The protein localises to the cell membrane. It carries out the reaction H2 + 2 oxidized [2Fe-2S]-[ferredoxin] = 2 reduced [2Fe-2S]-[ferredoxin] + 2 H(+). With respect to regulation, inhibited by 0.1 mM Cu(2+). In terms of biological role, alpha subunit of a hydrogen-evolving hydrogenase that utilizes protons both as a substrate for hydrogen production and proton translocation. Acts by coupling the redox reaction via ferredoxin and iron-sulfur (Fe-S) clusters to proton translocation across the membrane thereby conserving the redox energy in a proton gradient. This is Membrane-bound hydrogenase subunit alpha from Pyrococcus furiosus (strain ATCC 43587 / DSM 3638 / JCM 8422 / Vc1).